The primary structure comprises 90 residues: MKNIKPLADRVLIKIKEAESKTISGLYIPENAKEKTNIGTVIAIGSNKEEITVKVGDTVLYEKYAGAAVKIENKEHLILKAKEIVAIIEE.

This sequence belongs to the GroES chaperonin family. Heptamer of 7 subunits arranged in a ring. Interacts with the chaperonin GroEL.

It localises to the cytoplasm. In terms of biological role, together with the chaperonin GroEL, plays an essential role in assisting protein folding. The GroEL-GroES system forms a nano-cage that allows encapsulation of the non-native substrate proteins and provides a physical environment optimized to promote and accelerate protein folding. GroES binds to the apical surface of the GroEL ring, thereby capping the opening of the GroEL channel. The protein is Co-chaperonin GroES of Borreliella afzelii (strain PKo) (Borrelia afzelii).